A 307-amino-acid polypeptide reads, in one-letter code: Dihydroorotate dehydrogenase B (NAD(+)), catalytic subunit (307 aa).

FMN contacts are provided by residues S20 and 44-45 (KT). Substrate is bound by residues K44 and 68–72 (NSIGL). FMN-binding residues include N98 and N126. N126 is a binding site for substrate. C129 acts as the Nucleophile in catalysis. FMN-binding residues include K164 and I190. Substrate is bound at residue 191-192 (NT). FMN contacts are provided by residues G216, 242-243 (GG), and 264-265 (GS).

This sequence belongs to the dihydroorotate dehydrogenase family. Type 1 subfamily. In terms of assembly, heterotetramer of 2 PyrK and 2 PyrD type B subunits. FMN serves as cofactor.

The protein resides in the cytoplasm. The enzyme catalyses (S)-dihydroorotate + NAD(+) = orotate + NADH + H(+). It participates in pyrimidine metabolism; UMP biosynthesis via de novo pathway; orotate from (S)-dihydroorotate (NAD(+) route): step 1/1. Functionally, catalyzes the conversion of dihydroorotate to orotate with NAD(+) as electron acceptor. The polypeptide is Dihydroorotate dehydrogenase B (NAD(+)), catalytic subunit (pyrD) (Carboxydothermus hydrogenoformans (strain ATCC BAA-161 / DSM 6008 / Z-2901)).